The following is a 455-amino-acid chain: Succinyl-CoA--L-malate CoA-transferase alpha subunit (455 aa).

The disordered stretch occupies residues M1–Q58. 2 stretches are compositionally biased toward polar residues: residues L7–M28 and P48–Q58. D227 acts as the Nucleophile in catalysis.

It belongs to the CoA-transferase III family. As to quaternary structure, forms a large complex composed of six heterodimers (alpha, beta).

The catalysed reaction is succinyl-CoA + (S)-malate = (S)-malyl-CoA + succinate. It carries out the reaction (3S)-citramalate + succinyl-CoA = (3S)-citramalyl-CoA + succinate. Its function is as follows. Involved in the 3-hydroxypropionate cycle used for autotrophic carbon dioxide fixation. Catalyzes the transfer of CoA moiety from succinyl-CoA to L-malate to yield L-malyl-CoA. The chain is Succinyl-CoA--L-malate CoA-transferase alpha subunit (smtA) from Chloroflexus aurantiacus (strain ATCC 29366 / DSM 635 / J-10-fl).